A 485-amino-acid polypeptide reads, in one-letter code: Shutoff alkaline exonuclease (485 aa).

It belongs to the herpesviridae alkaline nuclease family. As to quaternary structure, forms a complex with the DNA polymerase, the DNA polymerase processivity factor, and the major DNA binding protein.

The protein resides in the host nucleus. The protein localises to the host cytoplasm. Plays a role in processing non linear or branched viral DNA intermediates in order to promote the production of mature packaged unit-length linear progeny viral DNA molecules. Exhibits endonuclease and exonuclease activities and accepts both double-stranded and single-stranded DNA as substrate. Exonuclease digestion of DNA is in the 5'-&gt; 3' direction and the products are 5'-monophosphate nucleosides. Additionally, forms a recombinase with the major DNA-binding protein, which displays strand exchange activity. Also acts as a cytoplasmic RNA endonuclease that induces degradation of the majority of the cellular messenger RNAs during early lytic infection. The resulting inhibition of cellular protein synthesis serves to ensure maximal viral gene expression and evasion from host immune response. Internally cleaves host mRNAs which are then degraded by the cellular exonuclease XRN1. Bypasses therefore the regulatory steps of deadenylation and decapping normally required for XRN1 activation. The polypeptide is Shutoff alkaline exonuclease (37) (Alcelaphine herpesvirus 1 (strain C500) (AlHV-1)).